The following is a 65-amino-acid chain: Large ribosomal subunit protein bL33m (65 aa).

A mitochondrion-targeting transit peptide spans 1 to 8 (MFLSAVTF).

Belongs to the bacterial ribosomal protein bL33 family. In terms of assembly, component of the mitochondrial ribosome large subunit (39S) which comprises a 16S rRNA and about 50 distinct proteins.

Its subcellular location is the mitochondrion. In Bos taurus (Bovine), this protein is Large ribosomal subunit protein bL33m (MRPL33).